The sequence spans 393 residues: Transcription factor bHLH112 (393 aa).

Disordered regions lie at residues 248–277 (TRAQ…SPLP) and 332–356 (KQGA…NENH). Residues 254–265 (SLKRAKDNESAA) are compositionally biased toward basic and acidic residues. Residues 270 to 319 (VTTPSPLPTFKVRKENLRDQITSLQQLVSPFGKTDTASVLQEAIEYIKFL) form the bHLH domain. A compositionally biased stretch (low complexity) spans 332–347 (KQGASNQQQQQISGKS).

In terms of assembly, homodimer.

It localises to the nucleus. In Arabidopsis thaliana (Mouse-ear cress), this protein is Transcription factor bHLH112 (BHLH112).